Consider the following 800-residue polypeptide: uncharacterized protein (800 aa).

The first 21 residues, 1-21 (MNRFFISTLLLLAQHLAPAAA), serve as a signal peptide directing secretion. A compositionally biased stretch (polar residues) spans 63 to 72 (SLSTGSPVEI). Disordered stretches follow at residues 63–470 (SLST…PLTT), 602–670 (TPIT…SSTS), and 710–776 (SSLS…TPSS). 4 stretches are compositionally biased toward low complexity: residues 73 to 314 (TSTS…SSTS), 321 to 368 (STSS…SSTS), 375 to 444 (STSS…TSTP), and 451 to 470 (TTSTSVPYTSTPVTSTPLTT). A compositionally biased stretch (low complexity) spans 710–720 (SSLSSIPNNST). Residues 721–734 (EVKTASTSSGTEIK) are compositionally biased toward polar residues. Over residues 735–776 (TASTSSGSSSSSSYTPASSTSTTTSSVSSRQSSSSSSFTPSS) the composition is skewed to low complexity.

It is found in the secreted. The protein resides in the cell surface. This is an uncharacterized protein from Schizosaccharomyces pombe (strain 972 / ATCC 24843) (Fission yeast).